A 285-amino-acid chain; its full sequence is Probable endonuclease 4 (285 aa).

Positions 68, 108, 145, 179, 182, 216, 229, 231, and 261 each coordinate Zn(2+).

The protein belongs to the AP endonuclease 2 family. Zn(2+) serves as cofactor.

It carries out the reaction Endonucleolytic cleavage to 5'-phosphooligonucleotide end-products.. In terms of biological role, endonuclease IV plays a role in DNA repair. It cleaves phosphodiester bonds at apurinic or apyrimidinic (AP) sites, generating a 3'-hydroxyl group and a 5'-terminal sugar phosphate. This chain is Probable endonuclease 4, found in Geotalea daltonii (strain DSM 22248 / JCM 15807 / FRC-32) (Geobacter daltonii).